A 307-amino-acid chain; its full sequence is Undecaprenyl-diphosphatase 2 (307 aa).

A run of 8 helical transmembrane segments spans residues 19 to 41 (GVTEFLPVSSTGHMIILGSIIGF), 56 to 76 (IHMFEIIIQLGAILAIVVLYW), 117 to 137 (FKFWTNIVVACIPAIVIGLPF), 144 to 164 (LLFFPAPVAAALMVGAVWMIF), 208 to 228 (IIGAWIVGVATVAGAEFSFFL), 229 to 249 (AIPMMLGASLLFLIKNSVVLS), 251 to 271 (VQILGLAVGFIVAFIVALVVV), and 285 to 305 (IFAVYRLAIGIIVLVLGFTKV).

This sequence belongs to the UppP family.

It localises to the cell membrane. It carries out the reaction di-trans,octa-cis-undecaprenyl diphosphate + H2O = di-trans,octa-cis-undecaprenyl phosphate + phosphate + H(+). Catalyzes the dephosphorylation of undecaprenyl diphosphate (UPP). Confers resistance to bacitracin. The sequence is that of Undecaprenyl-diphosphatase 2 from Clostridium acetobutylicum (strain ATCC 824 / DSM 792 / JCM 1419 / IAM 19013 / LMG 5710 / NBRC 13948 / NRRL B-527 / VKM B-1787 / 2291 / W).